Consider the following 476-residue polypeptide: tRNA (cytosine(72)-C(5))-methyltransferase NSUN6 (476 aa).

One can recognise a PUA domain in the interval 111 to 203; sequence QGEVIVGAQC…IGIRMTEPIY (93 aa). S-adenosyl-L-methionine contacts are provided by residues 242 to 248, Asp266, Asp293, and Asp323; that span reads CAAPGGK. The active-site Nucleophile is Cys373. N6-acetyllysine is present on Lys419.

The protein belongs to the class I-like SAM-binding methyltransferase superfamily. RsmB/NOP family.

The protein localises to the cytoplasm. The enzyme catalyses cytidine(72) in tRNA(Thr) + S-adenosyl-L-methionine = 5-methylcytidine(72) in tRNA(Thr) + S-adenosyl-L-homocysteine + H(+). It catalyses the reaction cytidine(72) in tRNA(Cys) + S-adenosyl-L-methionine = 5-methylcytidine(72) in tRNA(Cys) + S-adenosyl-L-homocysteine + H(+). Functionally, S-adenosyl-L-methionine-dependent methyltransferase that specifically methylates the C5 position of cytosine 72 in tRNA(Thr)(TGT) and tRNA(Cys)(GCA). In vitro also methylates tRNA(Thr)(AGT). Methylation requires, in the acceptor stem region, the presence of the 3'-CCA terminus, the target site C72, the discriminator base U73, and the second and third base pairs (2:71 and 3:70) in the tRNA substrates. The polypeptide is tRNA (cytosine(72)-C(5))-methyltransferase NSUN6 (Mus musculus (Mouse)).